Here is a 215-residue protein sequence, read N- to C-terminus: Formate dehydrogenase subunit beta (215 aa).

The 30-residue stretch at 3–32 folds into the 4Fe-4S ferredoxin-type 1 domain; it reads KGFFVDTTRCTACRGCQVACKQWHGNPATP. Positions 12, 15, 18, 22, 73, 76, 81, 121, 138, 141, 153, and 157 each coordinate [4Fe-4S] cluster. In terms of domain architecture, 4Fe-4S ferredoxin-type 2 spans 129–168; sequence VAESNQMAKCDMCIDRITNGLRPACVTSCPTGAMNFGDLS.

As to quaternary structure, heterodimer of alpha (FdhA) and beta (FdhB) subunits. [4Fe-4S] cluster serves as cofactor.

The protein localises to the periplasm. Its function is as follows. Beta chain of the formate dehydrogenase (FDH) catalyzes the reversible two-electron oxidation of formate to carbon dioxide. FDH loses activity in the presence of air, but this activity can be restored. This chain is an electron transfer unit. This Megalodesulfovibrio gigas (strain ATCC 19364 / DSM 1382 / NCIMB 9332 / VKM B-1759) (Desulfovibrio gigas) protein is Formate dehydrogenase subunit beta.